The primary structure comprises 421 residues: Granaticin polyketide putative beta-ketoacyl synthase 1 (421 aa).

The Ketosynthase family 3 (KS3) domain maps to 2–416; it reads TRRVVITGVG…GFQSAMVLHR (415 aa). Residues Cys-169, His-309, and His-346 each act as for beta-ketoacyl synthase activity in the active site.

This sequence belongs to the thiolase-like superfamily. Beta-ketoacyl-ACP synthases family.

Its pathway is antibiotic biosynthesis; granaticin biosynthesis. In Streptomyces violaceoruber, this protein is Granaticin polyketide putative beta-ketoacyl synthase 1 (gra-orf1).